The chain runs to 491 residues: Ketol-acid reductoisomerase (NADP(+)) (491 aa).

The 194-residue stretch at 15-208 folds into the KARI N-terminal Rossmann domain; the sequence is AQLGKCRFMG…GGHRAGVLES (194 aa). NADP(+)-binding positions include 45-48, R68, R76, S78, and 108-110; these read CGAQ and DKQ. The active site involves H132. G158 contributes to the NADP(+) binding site. 2 KARI C-terminal knotted domains span residues 209–344 and 345–484; these read SFVA…TAPQ and YEGK…MTDM. Residues D217, E221, E389, and E393 each contribute to the Mg(2+) site. S414 lines the substrate pocket.

The protein belongs to the ketol-acid reductoisomerase family. It depends on Mg(2+) as a cofactor.

The enzyme catalyses (2R)-2,3-dihydroxy-3-methylbutanoate + NADP(+) = (2S)-2-acetolactate + NADPH + H(+). It catalyses the reaction (2R,3R)-2,3-dihydroxy-3-methylpentanoate + NADP(+) = (S)-2-ethyl-2-hydroxy-3-oxobutanoate + NADPH + H(+). It participates in amino-acid biosynthesis; L-isoleucine biosynthesis; L-isoleucine from 2-oxobutanoate: step 2/4. It functions in the pathway amino-acid biosynthesis; L-valine biosynthesis; L-valine from pyruvate: step 2/4. In terms of biological role, involved in the biosynthesis of branched-chain amino acids (BCAA). Catalyzes an alkyl-migration followed by a ketol-acid reduction of (S)-2-acetolactate (S2AL) to yield (R)-2,3-dihydroxy-isovalerate. In the isomerase reaction, S2AL is rearranged via a Mg-dependent methyl migration to produce 3-hydroxy-3-methyl-2-ketobutyrate (HMKB). In the reductase reaction, this 2-ketoacid undergoes a metal-dependent reduction by NADPH to yield (R)-2,3-dihydroxy-isovalerate. This Escherichia coli (strain 55989 / EAEC) protein is Ketol-acid reductoisomerase (NADP(+)).